A 96-amino-acid polypeptide reads, in one-letter code: Large ribosomal subunit protein uL23 (96 aa).

This sequence belongs to the universal ribosomal protein uL23 family. Part of the 50S ribosomal subunit. Contacts protein L29, and trigger factor when it is bound to the ribosome.

One of the early assembly proteins it binds 23S rRNA. One of the proteins that surrounds the polypeptide exit tunnel on the outside of the ribosome. Forms the main docking site for trigger factor binding to the ribosome. In Maridesulfovibrio salexigens (strain ATCC 14822 / DSM 2638 / NCIMB 8403 / VKM B-1763) (Desulfovibrio salexigens), this protein is Large ribosomal subunit protein uL23.